A 299-amino-acid polypeptide reads, in one-letter code: MTEHKSGFVSIIGRPNVGKSTFVNRVIGHKIAIMSDKAQTTRNKIQGVMTRDDAQIIFIDTPGIHKPKHKLGDYMMKVAKNTLSEIDAIMFMVNANEEIGRGDEYIIEMLKNVKTPVFLVLNKIDLVHPDELMPKIEEYQSYMDFTEIVPISALEGLNVDHFIDVLKTYLPEGPKYYPDDQISDHPEQFVVGEIIREKILHLTSEEIPHAIGVNVDRMVKESEDRVHIEATIYVERGSQKGIVIGKGGKKLKEVGKRARRDIEMLLGSKVYLELWVKVQRDWRNKVNFIRQIGYVEDQD.

The Era-type G domain occupies 5-172; that stretch reads KSGFVSIIGR…IDVLKTYLPE (168 aa). The segment at 13–20 is G1; that stretch reads GRPNVGKS. 13 to 20 contacts GTP; it reads GRPNVGKS. Residues 39–43 form a G2 region; it reads QTTRN. A G3 region spans residues 60 to 63; the sequence is DTPG. GTP is bound by residues 60–64 and 122–125; these read DTPGI and NKID. Positions 122-125 are G4; that stretch reads NKID. A G5 region spans residues 151–153; the sequence is ISA. One can recognise a KH type-2 domain in the interval 203–280; sequence TSEEIPHAIG…YLELWVKVQR (78 aa).

It belongs to the TRAFAC class TrmE-Era-EngA-EngB-Septin-like GTPase superfamily. Era GTPase family. Monomer.

The protein localises to the cytoplasm. The protein resides in the cell membrane. Functionally, an essential GTPase that binds both GDP and GTP, with rapid nucleotide exchange. Plays a role in 16S rRNA processing and 30S ribosomal subunit biogenesis and possibly also in cell cycle regulation and energy metabolism. The polypeptide is GTPase Era (Staphylococcus aureus (strain NCTC 8325 / PS 47)).